Here is a 466-residue protein sequence, read N- to C-terminus: Soluble pyridine nucleotide transhydrogenase (466 aa).

Residue 36–45 coordinates FAD; that stretch reads ERYQNVGGGC.

This sequence belongs to the class-I pyridine nucleotide-disulfide oxidoreductase family. Homooligomer; probable homooctamer. FAD is required as a cofactor.

The protein localises to the cytoplasm. It carries out the reaction NAD(+) + NADPH = NADH + NADP(+). Conversion of NADPH, generated by peripheral catabolic pathways, to NADH, which can enter the respiratory chain for energy generation. The sequence is that of Soluble pyridine nucleotide transhydrogenase from Shigella flexneri.